A 741-amino-acid chain; its full sequence is Eukaryotic translation initiation factor 3 subunit B (741 aa).

Over residues 1 to 10 the composition is skewed to polar residues; that stretch reads MAPSFDTLSE. Residues 1 to 21 are disordered; sequence MAPSFDTLSEQDLHEEEEEEI. The region spanning 40–126 is the RRM domain; the sequence is TFIVIDGLPI…HTLAVNKLMD (87 aa). WD repeat units lie at residues 193–230, 232–289, 303–344, 514–557, and 572–610; these read AHWTQLFVQWSPKGTYLASVHPQGVQLWGGPAFSKQKQ, PHPF…RSFV, APKK…LLGK, IEKK…EKAE, and VEHYGVTDIDWDPTGRYVVSSASVWTHSMENGWNIHTFA. The interval 696–723 is disordered; that stretch reads DAYGIPEDADDAKVAKDAPPVSEDQGEA.

This sequence belongs to the eIF-3 subunit B family. In terms of assembly, component of the eukaryotic translation initiation factor 3 (eIF-3) complex.

Its subcellular location is the cytoplasm. RNA-binding component of the eukaryotic translation initiation factor 3 (eIF-3) complex, which is involved in protein synthesis of a specialized repertoire of mRNAs and, together with other initiation factors, stimulates binding of mRNA and methionyl-tRNAi to the 40S ribosome. The eIF-3 complex specifically targets and initiates translation of a subset of mRNAs involved in cell proliferation. This is Eukaryotic translation initiation factor 3 subunit B (prt1) from Aspergillus oryzae (strain ATCC 42149 / RIB 40) (Yellow koji mold).